The primary structure comprises 339 residues: Ribosomal RNA small subunit methyltransferase C (339 aa).

Belongs to the methyltransferase superfamily. RsmC family. In terms of assembly, monomer.

Its subcellular location is the cytoplasm. It catalyses the reaction guanosine(1207) in 16S rRNA + S-adenosyl-L-methionine = N(2)-methylguanosine(1207) in 16S rRNA + S-adenosyl-L-homocysteine + H(+). Specifically methylates the guanine in position 1207 of 16S rRNA in the 30S particle. The sequence is that of Ribosomal RNA small subunit methyltransferase C from Photobacterium profundum (strain SS9).